Here is a 329-residue protein sequence, read N- to C-terminus: UDP-3-O-acylglucosamine N-acyltransferase (329 aa).

Catalysis depends on H224, which acts as the Proton acceptor.

The protein belongs to the transferase hexapeptide repeat family. LpxD subfamily. Homotrimer.

The catalysed reaction is a UDP-3-O-[(3R)-3-hydroxyacyl]-alpha-D-glucosamine + a (3R)-hydroxyacyl-[ACP] = a UDP-2-N,3-O-bis[(3R)-3-hydroxyacyl]-alpha-D-glucosamine + holo-[ACP] + H(+). It functions in the pathway bacterial outer membrane biogenesis; LPS lipid A biosynthesis. Catalyzes the N-acylation of UDP-3-O-acylglucosamine using 3-hydroxyacyl-ACP as the acyl donor. Is involved in the biosynthesis of lipid A, a phosphorylated glycolipid that anchors the lipopolysaccharide to the outer membrane of the cell. The polypeptide is UDP-3-O-acylglucosamine N-acyltransferase (Albidiferax ferrireducens (strain ATCC BAA-621 / DSM 15236 / T118) (Rhodoferax ferrireducens)).